Reading from the N-terminus, the 606-residue chain is MKVINLIPTLMLTSLIILTLPIITTLLQNNKTNCFLYITKTAVTYAFAISLIPTLLFIQSNQEAYISNWHWMTIHTLKLSMSFKLDFFSLTFMPIALFITWSIMEFSLWYMHSDPHINRFFKYLLLFLITMLILVSANNLLQLFMGWEGVGIMSFLLISWWHGRTDANTAALQAMLYNRIGDMGFIMMMAWFTIHLNSWEFQQIFLTNPKNTTLPLLGLLLASAGKSAQFGLHPWLPSAMEGPTPVSALLHSSTMVMAGVFTLIRFYPLMENNLTIQTSTLCLGAITTLFTAICALTQNDIKKIIALSTSSQLGLMMVTIGINQPQLAFIHMCTHAFFKAMLFLSSGSIIHNLNNEQDIRKMGGLYKTMPITSTAIIIGSLALTGMPFLTGFYSKDPIIETANMSYINTWALLITLIAVSMTASYSTRIIFFALLGQPRYPPLTQVNENNPYLVNPIKRLILGSIFMGFLISMNTIPHTTPQMTMPPHLKFMALAVTLLGFTVATELNNMTHNLMFKQPSRMHTFSTMLGYYPTTTHRVLPYPSLTMSQNLATTIMDSIWLEKMIPKNLTTMQKTAASLVSNQKGLMKLYFLSFLLSITLGLLIAL.

The next 15 membrane-spanning stretches (helical) occupy residues 3–23 (VINLIPTLMLTSLIILTLPII), 38–58 (ITKTAVTYAFAISLIPTLLFI), 87–107 (FFSLTFMPIALFITWSIMEFS), 124–144 (LLLFLITMLILVSANNLLQLF), 180–200 (IGDMGFIMMMAWFTIHLNSWE), 216–236 (LLGLLLASAGKSAQFGLHPWL), 244–264 (TPVSALLHSSTMVMAGVFTLI), 276–296 (IQTSTLCLGAITTLFTAICAL), 304–323 (IIALSTSSQLGLMMVTIGIN), 328–350 (AFIHMCTHAFFKAMLFLSSGSII), 369–389 (MPITSTAIIIGSLALTGMPFL), 404–424 (MSYINTWALLITLIAVSMTAS), 460–480 (LILGSIFMGFLISMNTIPHTT), 483–503 (MTMPPHLKFMALAVTLLGFTV), and 586–606 (LMKLYFLSFLLSITLGLLIAL).

It belongs to the complex I subunit 5 family. In terms of assembly, core subunit of respiratory chain NADH dehydrogenase (Complex I) which is composed of 45 different subunits.

It is found in the mitochondrion inner membrane. The enzyme catalyses a ubiquinone + NADH + 5 H(+)(in) = a ubiquinol + NAD(+) + 4 H(+)(out). Core subunit of the mitochondrial membrane respiratory chain NADH dehydrogenase (Complex I) which catalyzes electron transfer from NADH through the respiratory chain, using ubiquinone as an electron acceptor. Essential for the catalytic activity and assembly of complex I. The protein is NADH-ubiquinone oxidoreductase chain 5 (MT-ND5) of Loxodonta africana (African elephant).